The chain runs to 101 residues: NADH-quinone oxidoreductase subunit K 1 (101 aa).

3 consecutive transmembrane segments (helical) span residues 4-24, 31-51, and 64-84; these read IGTMHYLVVAAMLFIIGTVGV, VVILMSIELILNAVNLNLVAF, and IFVMVDAAAEAAVGLGIVIAF.

Belongs to the complex I subunit 4L family. As to quaternary structure, NDH-1 is composed of 14 different subunits. Subunits NuoA, H, J, K, L, M, N constitute the membrane sector of the complex.

The protein localises to the cell inner membrane. It catalyses the reaction a quinone + NADH + 5 H(+)(in) = a quinol + NAD(+) + 4 H(+)(out). Functionally, NDH-1 shuttles electrons from NADH, via FMN and iron-sulfur (Fe-S) centers, to quinones in the respiratory chain. The immediate electron acceptor for the enzyme in this species is believed to be ubiquinone. Couples the redox reaction to proton translocation (for every two electrons transferred, four hydrogen ions are translocated across the cytoplasmic membrane), and thus conserves the redox energy in a proton gradient. This Koribacter versatilis (strain Ellin345) protein is NADH-quinone oxidoreductase subunit K 1.